We begin with the raw amino-acid sequence, 132 residues long: Gamma-crystallin-5 (132 aa).

The 40-residue stretch at 1 to 40 (ILYEQPSYRGHQYYLWKGEYPDFQRWMGFNDSIRSCRMSP) folds into the Beta/gamma crystallin 'Greek key' 2 domain. Positions 41–45 (YHQGQ) are connecting peptide. Beta/gamma crystallin 'Greek key' domains are found at residues 46–86 (YKMR…NVFD) and 87–129 (GNWM…RRVH).

This sequence belongs to the beta/gamma-crystallin family. As to quaternary structure, monomer.

In terms of biological role, crystallins are the dominant structural components of the vertebrate eye lens. The protein is Gamma-crystallin-5 (cryg5) of Xenopus laevis (African clawed frog).